Here is a 520-residue protein sequence, read N- to C-terminus: Glutamate--cysteine ligase (520 aa).

It belongs to the glutamate--cysteine ligase type 1 family. Type 1 subfamily.

The enzyme catalyses L-cysteine + L-glutamate + ATP = gamma-L-glutamyl-L-cysteine + ADP + phosphate + H(+). It participates in sulfur metabolism; glutathione biosynthesis; glutathione from L-cysteine and L-glutamate: step 1/2. The polypeptide is Glutamate--cysteine ligase (Sodalis glossinidius (strain morsitans)).